The following is a 415-amino-acid chain: N-succinylarginine dihydrolase (415 aa).

Substrate-binding positions include alanine 18–serine 27, asparagine 100, and histidine 127–arginine 128. Glutamate 161 is an active-site residue. Arginine 193 contacts substrate. The active site involves histidine 229. Residues aspartate 231 and asparagine 340 each coordinate substrate. Cysteine 346 acts as the Nucleophile in catalysis.

Belongs to the succinylarginine dihydrolase family. In terms of assembly, homodimer.

It catalyses the reaction N(2)-succinyl-L-arginine + 2 H2O + 2 H(+) = N(2)-succinyl-L-ornithine + 2 NH4(+) + CO2. Its pathway is amino-acid degradation; L-arginine degradation via AST pathway; L-glutamate and succinate from L-arginine: step 2/5. Catalyzes the hydrolysis of N(2)-succinylarginine into N(2)-succinylornithine, ammonia and CO(2). The sequence is that of N-succinylarginine dihydrolase from Sphingopyxis alaskensis (strain DSM 13593 / LMG 18877 / RB2256) (Sphingomonas alaskensis).